The chain runs to 233 residues: 7-cyano-7-deazaguanine synthase (233 aa).

Residue 18 to 28 participates in ATP binding; it reads FSGGQDSTTCL. Residues Cys198, Cys213, Cys216, and Cys219 each contribute to the Zn(2+) site.

This sequence belongs to the QueC family. Zn(2+) is required as a cofactor.

It catalyses the reaction 7-carboxy-7-deazaguanine + NH4(+) + ATP = 7-cyano-7-deazaguanine + ADP + phosphate + H2O + H(+). The protein operates within purine metabolism; 7-cyano-7-deazaguanine biosynthesis. Its function is as follows. Catalyzes the ATP-dependent conversion of 7-carboxy-7-deazaguanine (CDG) to 7-cyano-7-deazaguanine (preQ(0)). The sequence is that of 7-cyano-7-deazaguanine synthase from Wolinella succinogenes (strain ATCC 29543 / DSM 1740 / CCUG 13145 / JCM 31913 / LMG 7466 / NCTC 11488 / FDC 602W) (Vibrio succinogenes).